The primary structure comprises 104 residues: ATP-dependent Clp protease adapter protein ClpS (104 aa).

The protein belongs to the ClpS family. As to quaternary structure, binds to the N-terminal domain of the chaperone ClpA.

Its function is as follows. Involved in the modulation of the specificity of the ClpAP-mediated ATP-dependent protein degradation. This is ATP-dependent Clp protease adapter protein ClpS from Paraburkholderia xenovorans (strain LB400).